A 205-amino-acid chain; its full sequence is Protein DEPP1 (205 aa).

Composition is skewed to polar residues over residues 55–64 (DKVTAQSRPN) and 83–101 (GDSS…SPGT). A disordered region spans residues 55 to 171 (DKVTAQSRPN…RHQTSDLKSW (117 aa)). The segment covering 138-155 (MGKDTGRLCEARVPEHSL) has biased composition (basic and acidic residues).

It localises to the cytoplasm. The protein resides in the peroxisome. It is found in the mitochondrion. Acts as a critical modulator of FOXO3-induced autophagy via increased cellular ROS. The chain is Protein DEPP1 (Depp1) from Mus musculus (Mouse).